A 331-amino-acid polypeptide reads, in one-letter code: Phosphate acyltransferase (331 aa).

Belongs to the PlsX family. As to quaternary structure, homodimer. Probably interacts with PlsY.

It is found in the cytoplasm. It carries out the reaction a fatty acyl-[ACP] + phosphate = an acyl phosphate + holo-[ACP]. It functions in the pathway lipid metabolism; phospholipid metabolism. Functionally, catalyzes the reversible formation of acyl-phosphate (acyl-PO(4)) from acyl-[acyl-carrier-protein] (acyl-ACP). This enzyme utilizes acyl-ACP as fatty acyl donor, but not acyl-CoA. This chain is Phosphate acyltransferase, found in Wolinella succinogenes (strain ATCC 29543 / DSM 1740 / CCUG 13145 / JCM 31913 / LMG 7466 / NCTC 11488 / FDC 602W) (Vibrio succinogenes).